The primary structure comprises 163 residues: Probable ribosome biogenesis protein RLP24 (163 aa).

This sequence belongs to the eukaryotic ribosomal protein eL24 family. In terms of assembly, associated with nucleolar and cytoplasmic pre-60S particles. At the end of biogenesis it dissociates from cytoplasmic pre-60S particles and is likely to be exchanged for its ribosomal homolog, RPL24.

The protein resides in the nucleus. The protein localises to the nucleolus. Functionally, involved in the biogenesis of the 60S ribosomal subunit. Ensures the docking of GTPBP4/NOG1 to pre-60S particles. The sequence is that of Probable ribosome biogenesis protein RLP24 (Rsl24d1) from Rattus norvegicus (Rat).